The following is a 1008-amino-acid chain: MELKCLNWFENRGNDSRFLFLKARRADNAVVYLRFVQHFYYVVRADAVADIAQPLAWTRALGPMSVVSIDEIVARSAKIPERQRSEIELCLVASERKLAPPEVFMSDFLNVSWFFVAHDIDPDGCYRVDPALLRDLGSNCFHCDDPGACFAEKIPRFNVTRSGLFLDIECHFEKKFPSVFKNAVSHISFCVVDKDGAERRFTLTNSDMLSDADLEEAARREIPVCLDPADVKFDAEVTLCPEVTLLRVAKRLLEMPLDFVVTFNGHNFDLRYLDSRLSLLTGEHIRFRLPDGTETVNFCVYERTKSSHKGVGGVSSTTFHINNNNGTIYFDLYAFIQRTEKLDSYKLDAISKNAFHCTAVVEDARPDAVRFRGDRSTDADGNAAVFARVLSTGNYVTVDERVCRVLHKRVDEDGFTVDLADPAARAPGDRVTLAFGKDDVSLADMYANYSLDVCLDMARYCLHDACLCLYLWSHYGVETKIAAAASTYLLPQSVVFEYRASTCIKGPLMKLLLENRTVMVRADTKSKFFYEGGRVMAPKQKMHNKHVLIFDYNSLYPNVCIYANLSPETLVGVVVSDNRLDAEVAAVDVRRMFPAPRYIAVPCEPRSPELVAEVAIFDREAKGIIPMLLRSFLDARAKYKKLMKAAETAVDREIYNSMQYTYKITANSVYGLMGFRNSALFSYASAKSCTAIGRTMIAYLERTLDGASVCGTRLSLAAAPDNPLLRDEAFAGRAAELEIDAAVAGERTERVGFRSVYGDTDSVFLEVGASDIAFSRRVGRCLERVINEHVLFANFKVEFEAVYCNLIMQSKKKYTTIKFAVSDGGGSERVSKGTSETRRDVAPFHKLMIRKYKDMLCRALAEEGSGNVGVEILRSLEDELTFEFEARSMPLDWFLLSRTHHKNFKSPDNPNVALVTRYNAANAEAIEIGERYFFAYVCEEGPWRRRIANVKSYERVVDKTFRLDKNERIMYEVYFKRLCTEIVNLLDNKAMCTLFFERLFGSKPVFTG.

Belongs to the DNA polymerase type-B family. In terms of assembly, interacts with A20. Component of the Uracil-DNA glycosylase(UDG)-A20-polymerase complex; A20 and UDG form a heterodimeric processivity factor that associates with E9 to form the processive polymerase holoenzyme.

The enzyme catalyses DNA(n) + a 2'-deoxyribonucleoside 5'-triphosphate = DNA(n+1) + diphosphate. In terms of biological role, catalyzes DNA synthesis. Acquires processivity by associating with a heterodimeric processivity factor comprised of the viral A20 and D4 proteins, thereby forming the DNA polymerase holoenzyme. Displays 3'- to 5' exonuclease activity. Might participate in viral DNA recombination. Does not perform translesion synthesis across an abasic site. In Capra hircus (Goat), this protein is DNA polymerase (POL).